The primary structure comprises 256 residues: Omega-amidase YafV (256 aa).

The 231-residue stretch at 4–234 folds into the CN hydrolase domain; the sequence is LKITLLQQPL…ATRIDAELSM (231 aa). The active-site Proton acceptor is Glu-42. The active-site Proton donor is Lys-107. Residue Cys-141 is the Nucleophile of the active site.

The protein belongs to the carbon-nitrogen hydrolase superfamily. NIT1/NIT2 family.

The enzyme catalyses a monoamide of a dicarboxylate + H2O = a dicarboxylate + NH4(+). Hydrolyzes alpha-ketoglutaramate (a-KGM) to alpha-ketoglutarate (alpha-KG) and ammonia, has weak activity on L-glutamine, almost no activity on deaminated glutathione (dGSH) and none on glutathione. May function as a metabolite repair enzyme. The polypeptide is Omega-amidase YafV (yafV) (Escherichia coli (strain K12)).